An 85-amino-acid polypeptide reads, in one-letter code: Protein MC005 (85 aa).

As to quaternary structure, interacts with host IKBKG; this interaction prevents NF-kappa-B activation.

It is found in the host cytoplasm. Plays a role in the inhibition of the host NF-kappa-B pathway by preventing ubiquitin binding-dependent regulation of host IKBKB activation by IKBKG/NEMO. In Molluscum contagiosum virus subtype 1 (MOCV), this protein is Protein MC005 (MC005L).